An 89-amino-acid polypeptide reads, in one-letter code: Large ribosomal subunit protein bL31B (89 aa).

The protein belongs to the bacterial ribosomal protein bL31 family. Type B subfamily. Part of the 50S ribosomal subunit.

This Enterococcus faecalis (strain ATCC 700802 / V583) protein is Large ribosomal subunit protein bL31B.